The primary structure comprises 235 residues: Enolase-phosphatase E1 (235 aa).

Mg(2+)-binding residues include aspartate 10 and glutamate 12. Substrate contacts are provided by residues 130 to 131 (SS) and lysine 169. Aspartate 194 contacts Mg(2+).

This sequence belongs to the HAD-like hydrolase superfamily. MasA/MtnC family. Monomer. It depends on Mg(2+) as a cofactor.

It is found in the cytoplasm. Its subcellular location is the nucleus. The enzyme catalyses 5-methylsulfanyl-2,3-dioxopentyl phosphate + H2O = 1,2-dihydroxy-5-(methylsulfanyl)pent-1-en-3-one + phosphate. Its pathway is amino-acid biosynthesis; L-methionine biosynthesis via salvage pathway; L-methionine from S-methyl-5-thio-alpha-D-ribose 1-phosphate: step 3/6. It functions in the pathway amino-acid biosynthesis; L-methionine biosynthesis via salvage pathway; L-methionine from S-methyl-5-thio-alpha-D-ribose 1-phosphate: step 4/6. Its function is as follows. Bifunctional enzyme that catalyzes the enolization of 2,3-diketo-5-methylthiopentyl-1-phosphate (DK-MTP-1-P) into the intermediate 2-hydroxy-3-keto-5-methylthiopentenyl-1-phosphate (HK-MTPenyl-1-P), which is then dephosphorylated to form the acireductone 1,2-dihydroxy-3-keto-5-methylthiopentene (DHK-MTPene). In Komagataella phaffii (strain GS115 / ATCC 20864) (Yeast), this protein is Enolase-phosphatase E1.